The following is a 451-amino-acid chain: Probable glycine dehydrogenase (decarboxylating) subunit 1 (451 aa).

This sequence belongs to the GcvP family. N-terminal subunit subfamily. In terms of assembly, the glycine cleavage system is composed of four proteins: P, T, L and H. In this organism, the P 'protein' is a heterodimer of two subunits.

The enzyme catalyses N(6)-[(R)-lipoyl]-L-lysyl-[glycine-cleavage complex H protein] + glycine + H(+) = N(6)-[(R)-S(8)-aminomethyldihydrolipoyl]-L-lysyl-[glycine-cleavage complex H protein] + CO2. Its function is as follows. The glycine cleavage system catalyzes the degradation of glycine. The P protein binds the alpha-amino group of glycine through its pyridoxal phosphate cofactor; CO(2) is released and the remaining methylamine moiety is then transferred to the lipoamide cofactor of the H protein. The chain is Probable glycine dehydrogenase (decarboxylating) subunit 1 from Thioalkalivibrio sulfidiphilus (strain HL-EbGR7).